A 793-amino-acid chain; its full sequence is Outer membrane protein assembly factor BamA (793 aa).

An N-terminal signal peptide occupies residues 1-19; sequence MKKLLIASLLFGTTTTVFA. POTRA domains are found at residues 22–89, 90–170, 173–259, 262–341, and 344–418; these read FVAK…VVAK, SIIS…INED, AKLA…VNEG, YDLR…VDAG, and LTVR…VKER.

It belongs to the BamA family. In terms of assembly, part of the Bam complex.

It is found in the cell outer membrane. In terms of biological role, part of the outer membrane protein assembly complex, which is involved in assembly and insertion of beta-barrel proteins into the outer membrane. This is Outer membrane protein assembly factor BamA from Haemophilus influenzae.